A 446-amino-acid chain; its full sequence is Na(+)-translocating NADH-quinone reductase subunit A (446 aa).

The protein belongs to the NqrA family. As to quaternary structure, composed of six subunits; NqrA, NqrB, NqrC, NqrD, NqrE and NqrF.

The enzyme catalyses a ubiquinone + n Na(+)(in) + NADH + H(+) = a ubiquinol + n Na(+)(out) + NAD(+). In terms of biological role, NQR complex catalyzes the reduction of ubiquinone-1 to ubiquinol by two successive reactions, coupled with the transport of Na(+) ions from the cytoplasm to the periplasm. NqrA to NqrE are probably involved in the second step, the conversion of ubisemiquinone to ubiquinol. The protein is Na(+)-translocating NADH-quinone reductase subunit A of Histophilus somni (strain 2336) (Haemophilus somnus).